Consider the following 146-residue polypeptide: 3-hydroxyacyl-[acyl-carrier-protein] dehydratase FabZ (146 aa).

The active site involves His49.

Belongs to the thioester dehydratase family. FabZ subfamily.

The protein localises to the cytoplasm. The catalysed reaction is a (3R)-hydroxyacyl-[ACP] = a (2E)-enoyl-[ACP] + H2O. Its function is as follows. Involved in unsaturated fatty acids biosynthesis. Catalyzes the dehydration of short chain beta-hydroxyacyl-ACPs and long chain saturated and unsaturated beta-hydroxyacyl-ACPs. This is 3-hydroxyacyl-[acyl-carrier-protein] dehydratase FabZ from Pseudomonas fluorescens (strain Pf0-1).